Reading from the N-terminus, the 142-residue chain is Large ribosomal subunit protein uL13 (142 aa).

It belongs to the universal ribosomal protein uL13 family. In terms of assembly, part of the 50S ribosomal subunit.

In terms of biological role, this protein is one of the early assembly proteins of the 50S ribosomal subunit, although it is not seen to bind rRNA by itself. It is important during the early stages of 50S assembly. The protein is Large ribosomal subunit protein uL13 of Trichlorobacter lovleyi (strain ATCC BAA-1151 / DSM 17278 / SZ) (Geobacter lovleyi).